Consider the following 533-residue polypeptide: Probable fucosyltransferase 5 (533 aa).

Over 1–13 the chain is Cytoplasmic; that stretch reads MYQKFQISGKIVK. A helical; Signal-anchor for type II membrane protein membrane pass occupies residues 14 to 34; sequence TLGLKMKVLIAVSFGSLLFIL. Topologically, residues 35-533 are lumenal; it reads SYSNNFNNKL…YGGLKLYDEF (499 aa). N-linked (GlcNAc...) asparagine glycosylation is found at Asn202, Asn227, Asn374, Asn396, and Asn475.

It belongs to the glycosyltransferase 37 family. In terms of tissue distribution, expressed in roots, leaves, flowers and siliques.

Its subcellular location is the golgi apparatus. The protein localises to the golgi stack membrane. It participates in protein modification; protein glycosylation. May be involved in cell wall biosynthesis. May act as a fucosyltransferase. The polypeptide is Probable fucosyltransferase 5 (FUT5) (Arabidopsis thaliana (Mouse-ear cress)).